Consider the following 138-residue polypeptide: Large ribosomal subunit protein uL16 (138 aa).

The span at 1–17 (MLQPKRTKFRKQHKGRN) shows a compositional bias: basic residues. The tract at residues 1 to 22 (MLQPKRTKFRKQHKGRNRGVAT) is disordered.

This sequence belongs to the universal ribosomal protein uL16 family. Part of the 50S ribosomal subunit.

Binds 23S rRNA and is also seen to make contacts with the A and possibly P site tRNAs. This Acidithiobacillus ferrooxidans (strain ATCC 23270 / DSM 14882 / CIP 104768 / NCIMB 8455) (Ferrobacillus ferrooxidans (strain ATCC 23270)) protein is Large ribosomal subunit protein uL16.